The chain runs to 318 residues: Olfactory receptor 5M5 (318 aa).

At 1-31 (MLAPKKMVRGNYSMVTEFILLGLTDRPELQP) the chain is on the extracellular side. N-linked (GlcNAc...) asparagine glycosylation occurs at Asn11. A helical transmembrane segment spans residues 32 to 52 (LLFVLFLVIYLITVGGNLGMM). Residues 53–60 (VLIRIDSR) are Cytoplasmic-facing. The helical transmembrane segment at 61 to 81 (LHTPMYYFLASLSCLDLCYST) threads the bilayer. Over 82-105 (NVTPKMLVNFLSEKKTISYAACLV) the chain is Extracellular. A disulfide bridge links Cys103 with Cys195. The helical transmembrane segment at 106-126 (QCYFFIAMVITEYYMLAVMAY) threads the bilayer. The Cytoplasmic portion of the chain corresponds to 127-139 (DRYMAICNPLLYS). Residues 140–160 (SKMSKGVCVRLIAGPYIYGFL) traverse the membrane as a helical segment. Residues 161-202 (SGLMETMWTYRLTFCGSNIINHFYCADPPLIRLSCSDTFIKE) are Extracellular-facing. A helical membrane pass occupies residues 203–223 (TSMFVVAGFNLSNSLFIILIS). The Cytoplasmic segment spans residues 224-243 (YLFILIAILRMRSAEGRRKA). The helical transmembrane segment at 244 to 264 (FSTCGSHLVAVTVFYGTLFCM) threads the bilayer. Topologically, residues 265–277 (YVRPPTDKSVEQS) are extracellular. A helical transmembrane segment spans residues 278 to 298 (KIIAVFYTFVSPMLNPIIYSL). Residues 299-318 (RNKDVKHAFWKLVRRNVLSK) are Cytoplasmic-facing.

It belongs to the G-protein coupled receptor 1 family.

It is found in the cell membrane. Functionally, potential odorant receptor. The protein is Olfactory receptor 5M5 of Mus musculus (Mouse).